A 1445-amino-acid polypeptide reads, in one-letter code: 3'-5' RNA helicase YTHDC2 (1445 aa).

Residues Met1 to Gly50 are disordered. The span at Ser15 to Ala48 shows a compositional bias: gly residues. In terms of domain architecture, R3H spans Asp53–Asp121. One can recognise a Helicase ATP-binding domain in the interval Val218–Gln384. Gly231–Thr238 contributes to the ATP binding site. Positions Asp331–His334 match the DEAH box motif. 2 ANK repeats span residues Thr521–Ser553 and Asn554–Leu586. The Helicase C-terminal domain occupies Leu627–Ala799. Phosphoserine occurs at positions 1104, 1105, and 1107. The segment covering Glu1179 to Gly1189 has biased composition (polar residues). Residues Glu1179–Ile1303 form a disordered region. The segment covering Lys1246–Asp1264 has biased composition (basic and acidic residues). Residues Gln1265–Pro1279 are compositionally biased toward low complexity. Ser1278, Ser1282, and Ser1296 each carry phosphoserine. In terms of domain architecture, YTH spans Ile1303–Trp1433. Residues Lys1309 to Ser1311, Trp1325, and Trp1375 each bind RNA.

This sequence belongs to the DEAD box helicase family. DEAH subfamily. As to quaternary structure, interacts with MEIOC; binds transcripts that regulate the mitotic cell cycle inhibiting progression into metaphase, thereby allowing meiotic prophase to proceed normally. Interacts (via ANK repeats) with XRN1. Interacts with ZCCHC4. Associates with the small ribosomal subunit. Interacts with RBM46. As to expression, present in male and female germ cells (at protein level). Highly expressed in testis. Not detected in spermatogonia next to the tubule wall but is strongly expressed in spermatocytes, suggesting that it is up-regulated in germ cells upon entry into meiosis (at protein level).

It localises to the cytoplasm. It is found in the perinuclear region. The catalysed reaction is ATP + H2O = ADP + phosphate + H(+). 3'-5' RNA helicase that plays a key role in the male and female germline by promoting transition from mitotic to meiotic divisions in stem cells. Specifically recognizes and binds N6-methyladenosine (m6A)-containing RNAs, a modification present at internal sites of mRNAs and some non-coding RNAs that plays a role in the efficiency of RNA processing and stability. Essential for ensuring a successful progression of the meiotic program in the germline by regulating the level of m6A-containing RNAs. Acts by binding and promoting degradation of m6A-containing mRNAs: the 3'-5' RNA helicase activity is required for this process and RNA degradation may be mediated by XRN1 exoribonuclease. Required for both spermatogenesis and oogenesis. This is 3'-5' RNA helicase YTHDC2 from Mus musculus (Mouse).